We begin with the raw amino-acid sequence, 216 residues long: Thiamine-phosphate synthase (216 aa).

Residues 39–43 (QLRRK) and Asn-71 contribute to the 4-amino-2-methyl-5-(diphosphooxymethyl)pyrimidine site. Residues Asp-72 and Asp-91 each coordinate Mg(2+). Ser-109 contacts 4-amino-2-methyl-5-(diphosphooxymethyl)pyrimidine. A 2-[(2R,5Z)-2-carboxy-4-methylthiazol-5(2H)-ylidene]ethyl phosphate-binding site is contributed by 136–138 (SPT). Lys-139 contributes to the 4-amino-2-methyl-5-(diphosphooxymethyl)pyrimidine binding site. 2-[(2R,5Z)-2-carboxy-4-methylthiazol-5(2H)-ylidene]ethyl phosphate is bound by residues Gly-172 and 192 to 193 (IT).

The protein belongs to the thiamine-phosphate synthase family. Mg(2+) serves as cofactor.

It carries out the reaction 2-[(2R,5Z)-2-carboxy-4-methylthiazol-5(2H)-ylidene]ethyl phosphate + 4-amino-2-methyl-5-(diphosphooxymethyl)pyrimidine + 2 H(+) = thiamine phosphate + CO2 + diphosphate. The catalysed reaction is 2-(2-carboxy-4-methylthiazol-5-yl)ethyl phosphate + 4-amino-2-methyl-5-(diphosphooxymethyl)pyrimidine + 2 H(+) = thiamine phosphate + CO2 + diphosphate. It catalyses the reaction 4-methyl-5-(2-phosphooxyethyl)-thiazole + 4-amino-2-methyl-5-(diphosphooxymethyl)pyrimidine + H(+) = thiamine phosphate + diphosphate. Its pathway is cofactor biosynthesis; thiamine diphosphate biosynthesis; thiamine phosphate from 4-amino-2-methyl-5-diphosphomethylpyrimidine and 4-methyl-5-(2-phosphoethyl)-thiazole: step 1/1. Condenses 4-methyl-5-(beta-hydroxyethyl)thiazole monophosphate (THZ-P) and 2-methyl-4-amino-5-hydroxymethyl pyrimidine pyrophosphate (HMP-PP) to form thiamine monophosphate (TMP). The sequence is that of Thiamine-phosphate synthase from Bordetella avium (strain 197N).